Reading from the N-terminus, the 62-residue chain is Zinc finger-containing protein P28b (62 aa).

Residues 1 to 46 form an RING-type; degenerate zinc finger; the sequence is MKLFTQNDRYFGLLDSCTHIFCITCINIWHKTRRETGASDNCPICR.

This chain is Zinc finger-containing protein P28b, found in Vaccinia virus (strain Western Reserve) (VACV).